A 480-amino-acid polypeptide reads, in one-letter code: Ciliated left-right organizer protein containing ZP-N domains homolog (480 aa).

Residues 1–23 (MKNQHNTFWVLCLLFVMFDETFS) form the signal peptide.

As to expression, expressed specifically by cells of the ciliated left-right organizer.

Its subcellular location is the secreted. The chain is Ciliated left-right organizer protein containing ZP-N domains homolog from Xenopus tropicalis (Western clawed frog).